The sequence spans 57 residues: Lantibiotic nukacin (57 aa).

Residues 1–30 (MENSKVMKDIEVANLLEEVQEDELNEVLGA) constitute a propeptide that is removed on maturation. Positions 39–44 (TVSHDC) form a cross-link, beta-methyllanthionine (Thr-Cys). Cross-links (lanthionine (Ser-Cys)) lie at residues 41-55 (SHDC…VFTC) and 48-56 (SFQFVFTCC). Thr-54 carries the post-translational modification 2,3-didehydrobutyrine.

Post-translationally, maturation of lantibiotics involves the enzymatic conversion of Thr, and Ser into dehydrated AA and the formation of thioether bonds with cysteine. This is followed by membrane translocation and cleavage of the modified precursor.

The protein localises to the secreted. In terms of biological role, lanthionine-containing peptide antibiotic (lantibiotic) active on Gram-positive bacteria. The bactericidal activity of lantibiotics is based on depolarization of energized bacterial cytoplasmic membranes, initiated by the formation of aqueous transmembrane pores. The sequence is that of Lantibiotic nukacin from Staphylococcus simulans.